Consider the following 441-residue polypeptide: Lysine histidine transporter 2 (441 aa).

Residues 1–32 are Cytoplasmic-facing; that stretch reads MGNSEMSASEVAAAKQKNVDDWLPITSSRNAK. Residues 33-53 form a helical membrane-spanning segment; sequence WWYSAFHNVTAMVGAGVLSLP. The Extracellular segment spans residues 54–58; sequence YAMSN. Residues 59–79 form a helical membrane-spanning segment; it reads LGWGPGVTIMVMSWIITLYTL. Residues 80-110 are Cytoplasmic-facing; sequence WQMVEMHEIVPGKRLDRYHELGQHAFGEKLG. A helical transmembrane segment spans residues 111-131; sequence LWIVVPQQLIVEVGVDIVYMV. Residues 132 to 152 are Extracellular-facing; it reads TGGASLKKVHQLVCPDCKEIR. Residues 153 to 173 traverse the membrane as a helical segment; the sequence is TTFWIMIFASVHFVISHLPNF. Topologically, residues 174–175 are cytoplasmic; that stretch reads NS. A helical membrane pass occupies residues 176–196; it reads ISIISLAAAVMSLTYSTIAWA. Residues 197–222 are Extracellular-facing; it reads ASVHKGVHPDVDYSPRASTDVGKVFN. Residues 223-243 form a helical membrane-spanning segment; the sequence is FLNALGDVAFAYAGHNVVLEI. The Cytoplasmic segment spans residues 244-263; it reads QATIPSTPEMPSKVPMWRGV. A helical membrane pass occupies residues 264 to 284; the sequence is IVAYIVVAICYFPVAFLGYYI. The Extracellular segment spans residues 285-300; that stretch reads FGNSVDDNILITLEKP. Residues 301 to 321 form a helical membrane-spanning segment; the sequence is IWLIAMANMFVVIHVIGSYQI. Topologically, residues 322–347 are cytoplasmic; that stretch reads FAMPVFDMLETVLVKKMNFNPSFKLR. Residues 348–370 form a helical membrane-spanning segment; sequence FITRSLYVAFTMIVAICVPFFGG. The Extracellular portion of the chain corresponds to 371–373; sequence LLG. The helical transmembrane segment at 374 to 396 threads the bilayer; it reads FFGGFAFAPTTYYLPCIMWLVLK. Residues 397 to 406 lie on the Cytoplasmic side of the membrane; it reads KPKRFGLSWT. A helical membrane pass occupies residues 407-427; sequence ANWFCIIVGVLLTILAPIGGL. Topologically, residues 428–441 are extracellular; the sequence is RTIIINAKTYKFFS.

Belongs to the amino acid/polyamine transporter 2 family. Amino acid/auxin permease (AAAP) (TC 2.A.18.2) subfamily. As to expression, expressed in flower buds and to lower levels in leaves and stems. Not detected in roots and siliques. Restricted to the tapetum cell layer.

It localises to the cell membrane. Its activity is regulated as follows. Inhibited by diethylstibestrol (DES), 2,4-dinitrophenol (DNP) and carbonlycyanide m-chlorophenylhydrazone (CCCP). Its function is as follows. Amino acid-proton symporter. Transporter with a broad specificity for neutral and acidic amino acids. Basic amino acids are only marginally transported. Involved in import of amino acids into the tapetum cells for synthesis of compounds important for microspore structure. The chain is Lysine histidine transporter 2 (LHT2) from Arabidopsis thaliana (Mouse-ear cress).